Reading from the N-terminus, the 174-residue chain is Crossover junction endodeoxyribonuclease RuvC (174 aa).

Catalysis depends on residues D8, E67, and D139. 3 residues coordinate Mg(2+): D8, E67, and D139.

This sequence belongs to the RuvC family. Homodimer which binds Holliday junction (HJ) DNA. The HJ becomes 2-fold symmetrical on binding to RuvC with unstacked arms; it has a different conformation from HJ DNA in complex with RuvA. In the full resolvosome a probable DNA-RuvA(4)-RuvB(12)-RuvC(2) complex forms which resolves the HJ. Mg(2+) serves as cofactor.

Its subcellular location is the cytoplasm. The catalysed reaction is Endonucleolytic cleavage at a junction such as a reciprocal single-stranded crossover between two homologous DNA duplexes (Holliday junction).. Functionally, the RuvA-RuvB-RuvC complex processes Holliday junction (HJ) DNA during genetic recombination and DNA repair. Endonuclease that resolves HJ intermediates. Cleaves cruciform DNA by making single-stranded nicks across the HJ at symmetrical positions within the homologous arms, yielding a 5'-phosphate and a 3'-hydroxyl group; requires a central core of homology in the junction. The consensus cleavage sequence is 5'-(A/T)TT(C/G)-3'. Cleavage occurs on the 3'-side of the TT dinucleotide at the point of strand exchange. HJ branch migration catalyzed by RuvA-RuvB allows RuvC to scan DNA until it finds its consensus sequence, where it cleaves and resolves the cruciform DNA. The polypeptide is Crossover junction endodeoxyribonuclease RuvC (Pseudomonas putida (strain ATCC 47054 / DSM 6125 / CFBP 8728 / NCIMB 11950 / KT2440)).